The chain runs to 143 residues: uncharacterized protein (143 aa).

A mitochondrion-targeting transit peptide spans 1–38 (MKYWKYLSQLTIRRPLTYNNALLYRNRFPSILTWKRSA).

It is found in the mitochondrion. This is an uncharacterized protein from Schizosaccharomyces pombe (strain 972 / ATCC 24843) (Fission yeast).